The chain runs to 66 residues: Large ribosomal subunit protein bL33c (66 aa).

Belongs to the bacterial ribosomal protein bL33 family.

The protein localises to the plastid. The protein resides in the chloroplast. The chain is Large ribosomal subunit protein bL33c from Ceratophyllum demersum (Rigid hornwort).